Here is a 350-residue protein sequence, read N- to C-terminus: Phenylalanine--tRNA ligase alpha subunit (350 aa).

Glu-271 contacts Mg(2+).

The protein belongs to the class-II aminoacyl-tRNA synthetase family. Phe-tRNA synthetase alpha subunit type 1 subfamily. In terms of assembly, tetramer of two alpha and two beta subunits. The cofactor is Mg(2+).

It localises to the cytoplasm. The enzyme catalyses tRNA(Phe) + L-phenylalanine + ATP = L-phenylalanyl-tRNA(Phe) + AMP + diphosphate + H(+). The sequence is that of Phenylalanine--tRNA ligase alpha subunit from Verminephrobacter eiseniae (strain EF01-2).